The primary structure comprises 1219 residues: Polyamine-transporting ATPase 13A3 (1219 aa).

Over 1 to 28 (MDKEERKTINKGQEDEMEIHGYNLCRWK) the chain is Cytoplasmic. Residues 29 to 49 (LAMVFVGVICTGGFLLLLLYW) lie within the membrane without spanning it. Residues 50-201 (LPEWRVKATC…IAVKVPSVFK (152 aa)) are Cytoplasmic-facing. A helical transmembrane segment spans residues 202 to 222 (LLIKEVLNPFYIFQLFSVILW). Residues 223 to 228 (SVDEYY) lie on the Lumenal side of the membrane. The chain crosses the membrane as a helical span at residues 229–249 (YYALAIVIMSVVSIISSLYSI). Topologically, residues 250-405 (RKQYVMLHDM…KPTDFKLYRD (156 aa)) are cytoplasmic. A helical transmembrane segment spans residues 406–426 (AYLFLLCLVVVAGIGFIYTII). Residues 427-444 (NSILNEKEVQEIIIKSLD) are Lumenal-facing. Residues 445-465 (IITITVPPALPAAMTAGIVYA) traverse the membrane as a helical segment. Over 466 to 936 (QRRLKKVGIF…ALMTSFCVFK (471 aa)) the chain is Cytoplasmic. Residue Asp-494 is the 4-aspartylphosphate intermediate of the active site. Mg(2+) is bound by residues Asp-494 and Thr-496. Residues 494-496 (DKT), Phe-624, Arg-680, and Asp-746 contribute to the ATP site. Residue Ser-813 is modified to Phosphoserine. Mg(2+) is bound by residues Asp-879 and Asp-883. 879–883 (DGAND) is an ATP binding site. Residues 937 to 957 (FMALYSIIQYFSVTLLYSILS) traverse the membrane as a helical segment. A topological domain (lumenal) is located at residue Asn-958. The chain crosses the membrane as a helical span at residues 959–979 (LGDFQFLFIDLAIILVVVFTM). The Cytoplasmic portion of the chain corresponds to 980–995 (SLNPAWKELVAQRPPS). Residues 996 to 1016 (GLISGALLFSVLSQIVISVGF) traverse the membrane as a helical segment. Over 1017–1066 (QSLGFFWVKQYKVCDPNSDVCNTTRSACWNSSHLYNGTELDSCKIQNYEN) the chain is Lumenal. Residues 1067–1087 (TTVFFISSFQYLTVAVAFSKG) traverse the membrane as a helical segment. Over 1088–1098 (KPFRQPCYKNY) the chain is Cytoplasmic. Residues 1099-1119 (FFVISVIILYVFILFIMLHPV) traverse the membrane as a helical segment. Residues 1120–1136 (ASVDQVLEIMCVPYQWR) are Lumenal-facing. Residues 1137 to 1157 (IYMLIIVLINAFVSITVEESV) traverse the membrane as a helical segment. Residues 1158-1219 (DRWGKCCLSW…NGSCQIITIA (62 aa)) lie on the Cytoplasmic side of the membrane.

Belongs to the cation transport ATPase (P-type) (TC 3.A.3) family. Type V subfamily. Expression is greatest in liver, followed by kidney, colon, stomach, brain and small intestine. Isoform 1 is highly expressed in the kidney while isoform 2 is highly expressed in the brain.

It localises to the recycling endosome membrane. Its subcellular location is the early endosome membrane. The protein localises to the late endosome membrane. It catalyses the reaction putrescine(out) + ATP + H2O = putrescine(in) + ADP + phosphate + H(+). Functionally, ATP-driven pump involved in endocytosis-dependent polyamine transport. Uses ATP as an energy source to transfer polyamine precursor putrescine from the endosomal compartment to the cytosol. This Mus musculus (Mouse) protein is Polyamine-transporting ATPase 13A3.